The sequence spans 564 residues: Proline--tRNA ligase (564 aa).

It belongs to the class-II aminoacyl-tRNA synthetase family. ProS type 1 subfamily. As to quaternary structure, homodimer.

The protein resides in the cytoplasm. The enzyme catalyses tRNA(Pro) + L-proline + ATP = L-prolyl-tRNA(Pro) + AMP + diphosphate. Functionally, catalyzes the attachment of proline to tRNA(Pro) in a two-step reaction: proline is first activated by ATP to form Pro-AMP and then transferred to the acceptor end of tRNA(Pro). As ProRS can inadvertently accommodate and process non-cognate amino acids such as alanine and cysteine, to avoid such errors it has two additional distinct editing activities against alanine. One activity is designated as 'pretransfer' editing and involves the tRNA(Pro)-independent hydrolysis of activated Ala-AMP. The other activity is designated 'posttransfer' editing and involves deacylation of mischarged Ala-tRNA(Pro). The misacylated Cys-tRNA(Pro) is not edited by ProRS. The chain is Proline--tRNA ligase from Xanthomonas campestris pv. campestris (strain 8004).